The primary structure comprises 878 residues: Probable outer membrane protein PmpI (878 aa).

Residues 1-24 (MRPDHMNFCCLCAAILSSTAVLFG) form the signal peptide. Residues 360-371 (SSKESPLPSSLQ) show a composition bias toward low complexity. A disordered region spans residues 360-381 (SSKESPLPSSLQASVTSPTPAT). A compositionally biased stretch (polar residues) spans 372–381 (ASVTSPTPAT). The 277-residue stretch at 602-878 (GGAYLFGTWG…SLDLGTTYRF (277 aa)) folds into the Autotransporter domain.

It belongs to the PMP outer membrane protein family.

The protein resides in the secreted. The protein localises to the cell wall. It localises to the cell outer membrane. This is Probable outer membrane protein PmpI (pmpI) from Chlamydia trachomatis serovar D (strain ATCC VR-885 / DSM 19411 / UW-3/Cx).